The sequence spans 109 residues: Nucleoid-associated protein Swoo_1794 (109 aa).

The tract at residues 88-109 is disordered; sequence QKDKMAEVTGGMQLPPGMKMPF.

It belongs to the YbaB/EbfC family. As to quaternary structure, homodimer.

It localises to the cytoplasm. The protein resides in the nucleoid. In terms of biological role, binds to DNA and alters its conformation. May be involved in regulation of gene expression, nucleoid organization and DNA protection. This Shewanella woodyi (strain ATCC 51908 / MS32) protein is Nucleoid-associated protein Swoo_1794.